Here is a 705-residue protein sequence, read N- to C-terminus: DNA ligase (705 aa).

Residues Asp43 to Asp47, Ser92 to Leu93, and Asp123 each bind NAD(+). The active-site N6-AMP-lysine intermediate is the Lys125. Arg146, Glu184, Lys304, and Lys328 together coordinate NAD(+). Zn(2+) is bound by residues Cys422, Cys425, Cys440, and Cys445. The BRCT domain occupies Thr607–Asp696. The interval Ser684–Gln705 is disordered.

It belongs to the NAD-dependent DNA ligase family. LigA subfamily. Mg(2+) is required as a cofactor. Mn(2+) serves as cofactor.

It carries out the reaction NAD(+) + (deoxyribonucleotide)n-3'-hydroxyl + 5'-phospho-(deoxyribonucleotide)m = (deoxyribonucleotide)n+m + AMP + beta-nicotinamide D-nucleotide.. Functionally, DNA ligase that catalyzes the formation of phosphodiester linkages between 5'-phosphoryl and 3'-hydroxyl groups in double-stranded DNA using NAD as a coenzyme and as the energy source for the reaction. It is essential for DNA replication and repair of damaged DNA. This chain is DNA ligase, found in Oleidesulfovibrio alaskensis (strain ATCC BAA-1058 / DSM 17464 / G20) (Desulfovibrio alaskensis).